A 397-amino-acid chain; its full sequence is Argininosuccinate synthase (397 aa).

7 to 15 (LYSGGLDTS) lines the ATP pocket. Y83 is an L-citrulline binding site. G113 contacts ATP. 3 residues coordinate L-aspartate: T115, N119, and D120. N119 contributes to the L-citrulline binding site. L-citrulline contacts are provided by R123, S169, S178, E253, and Y265.

It belongs to the argininosuccinate synthase family. Type 1 subfamily. As to quaternary structure, homotetramer.

The protein localises to the cytoplasm. It catalyses the reaction L-citrulline + L-aspartate + ATP = 2-(N(omega)-L-arginino)succinate + AMP + diphosphate + H(+). Its pathway is amino-acid biosynthesis; L-arginine biosynthesis; L-arginine from L-ornithine and carbamoyl phosphate: step 2/3. This is Argininosuccinate synthase from Thermoplasma volcanium (strain ATCC 51530 / DSM 4299 / JCM 9571 / NBRC 15438 / GSS1).